The primary structure comprises 294 residues: Glyceraldehyde-3-phosphate dehydrogenase (294 aa).

Residues Asp19, Lys63, and Thr105 each contribute to the NAD(+) site. D-glyceraldehyde 3-phosphate is bound by residues 134 to 136 (SCT), Thr165, 194 to 195 (TG), and Arg217. The Nucleophile role is filled by Cys135.

It belongs to the glyceraldehyde-3-phosphate dehydrogenase family. Homotetramer.

The protein localises to the cytoplasm. The enzyme catalyses D-glyceraldehyde 3-phosphate + phosphate + NAD(+) = (2R)-3-phospho-glyceroyl phosphate + NADH + H(+). The protein operates within carbohydrate degradation; glycolysis; pyruvate from D-glyceraldehyde 3-phosphate: step 1/5. Its function is as follows. Catalyzes the oxidative phosphorylation of glyceraldehyde 3-phosphate (G3P) to 1,3-bisphosphoglycerate (BPG) using the cofactor NAD. The first reaction step involves the formation of a hemiacetal intermediate between G3P and a cysteine residue, and this hemiacetal intermediate is then oxidized to a thioester, with concomitant reduction of NAD to NADH. The reduced NADH is then exchanged with the second NAD, and the thioester is attacked by a nucleophilic inorganic phosphate to produce BPG. The sequence is that of Glyceraldehyde-3-phosphate dehydrogenase (gap) from Klebsiella aerogenes (Enterobacter aerogenes).